The chain runs to 1034 residues: Putative beta-glucuronidase (1034 aa).

The active-site Proton donor is glutamate 432. Residues 909–1034 enclose the CBM6 domain; the sequence is VDISAEEGVL…GPFIDELFID (126 aa).

It belongs to the glycosyl hydrolase 2 family.

The protein localises to the cytoplasm. The enzyme catalyses a beta-D-glucuronoside + H2O = D-glucuronate + an alcohol. Glycoside hydrolase that may be involved in ulvan degradation. Ulvan is the main polysaccharide component of the Ulvales (green seaweed) cell wall. It is composed of disaccharide building blocks comprising 3-sulfated rhamnose (Rha3S) linked to D-glucuronic acid (GlcA), L-iduronic acid (IduA), or D-xylose (Xyl). This Formosa agariphila (strain DSM 15362 / KCTC 12365 / LMG 23005 / KMM 3901 / M-2Alg 35-1) protein is Putative beta-glucuronidase.